Here is a 507-residue protein sequence, read N- to C-terminus: ATP synthase subunit alpha, chloroplastic (507 aa).

170 to 177 (GDRQTGKT) provides a ligand contact to ATP.

It belongs to the ATPase alpha/beta chains family. F-type ATPases have 2 components, CF(1) - the catalytic core - and CF(0) - the membrane proton channel. CF(1) has five subunits: alpha(3), beta(3), gamma(1), delta(1), epsilon(1). CF(0) has four main subunits: a, b, b' and c.

It is found in the plastid. Its subcellular location is the chloroplast thylakoid membrane. The catalysed reaction is ATP + H2O + 4 H(+)(in) = ADP + phosphate + 5 H(+)(out). Its function is as follows. Produces ATP from ADP in the presence of a proton gradient across the membrane. The alpha chain is a regulatory subunit. This is ATP synthase subunit alpha, chloroplastic from Gossypium hirsutum (Upland cotton).